The chain runs to 177 residues: Calcineurin subunit B (177 aa).

EF-hand domains are found at residues 25–60 (KEIK…AVNP), 62–92 (VKRV…FNAQ), 94–129 (DKQR…MVGN), and 135–170 (QLQQ…QDLE). 20 residues coordinate Ca(2+): Asp-38, Asp-40, Asn-42, Thr-44, Glu-49, Asp-70, Asn-72, Asp-74, Ser-76, Glu-81, Asp-107, Asp-109, Asp-111, Tyr-113, Glu-118, Asp-148, Asp-150, Asp-152, Lys-154, and Glu-159.

The protein belongs to the calcineurin regulatory subunit family. Composed of a catalytic subunit (A) and a regulatory subunit (B).

Regulatory subunit of calcineurin, a calcium-dependent, calmodulin stimulated protein phosphatase. Confers calcium sensitivity. This is Calcineurin subunit B (CNB1) from Naegleria gruberi (Amoeba).